Here is a 224-residue protein sequence, read N- to C-terminus: Small ribosomal subunit protein uS3 (224 aa).

The region spanning 38-106 is the KH type-2 domain; that stretch reads LREFVKEKLG…EVYLNVVEVR (69 aa).

Belongs to the universal ribosomal protein uS3 family. As to quaternary structure, part of the 30S ribosomal subunit. Forms a tight complex with proteins S10 and S14.

Binds the lower part of the 30S subunit head. Binds mRNA in the 70S ribosome, positioning it for translation. This chain is Small ribosomal subunit protein uS3, found in Anaeromyxobacter dehalogenans (strain 2CP-1 / ATCC BAA-258).